The sequence spans 604 residues: MRLSQMLFVTLRDDPADAEIPSHKLLLRAGYIRRIGSGIYAYLPLMWRVLQKVSQIVREEMNAAGAQECLLPQLQPSELWKESGRWDTYTKAEGIMFSLIDRREQQLGLGPTHEEVITAIARDMIRSYRQLPLHLYQLQTKFRDEIRPRFGLMRGREFIMKDGYSFHVDEDSLKKTYQDMYQAYSNMLRRAGLAFRPVEADSGAIGGSGSTEFMVLAEAGEDEVLYTDDGKYAANVEKAVSLPADAEPSQFTAFEKRETPGTETIEKVTQFLKASPTQIVKNVLYQTVYDNGVTVLVLVIIRGDQEVNEVKLQNELTKLAPNYGAKAIINLTVPSAENQQTWTAKSLPLGYIAPDIADEYIAANKQIHPKFVRFVDKTAVDLKNFITGANEAGYHVVGANWGEQFPLPEIVVDVRKARPGDRAIHDSTQILKSARGIEVGHIFQLGTKYSQALGATYTNEQGEEKPLVMGCYGVGVSRLAQSAVEQSYDKDGIIWPVAIAPYHAIVTIPNINDAQQVEIAERLYTELNQSGVETLLDDRNERAGVKFKDADLIGIPYRIVTGRAITNGKVEIVERATRQSQEIPIDEVITTLQQWIKAAIEQKN.

This sequence belongs to the class-II aminoacyl-tRNA synthetase family. ProS type 1 subfamily. As to quaternary structure, homodimer.

The protein localises to the cytoplasm. The enzyme catalyses tRNA(Pro) + L-proline + ATP = L-prolyl-tRNA(Pro) + AMP + diphosphate. In terms of biological role, catalyzes the attachment of proline to tRNA(Pro) in a two-step reaction: proline is first activated by ATP to form Pro-AMP and then transferred to the acceptor end of tRNA(Pro). As ProRS can inadvertently accommodate and process non-cognate amino acids such as alanine and cysteine, to avoid such errors it has two additional distinct editing activities against alanine. One activity is designated as 'pretransfer' editing and involves the tRNA(Pro)-independent hydrolysis of activated Ala-AMP. The other activity is designated 'posttransfer' editing and involves deacylation of mischarged Ala-tRNA(Pro). The misacylated Cys-tRNA(Pro) is not edited by ProRS. In Trichormus variabilis (strain ATCC 29413 / PCC 7937) (Anabaena variabilis), this protein is Proline--tRNA ligase.